The following is a 340-amino-acid chain: GTP-binding protein REM 2 (340 aa).

The span at 1-13 (MHTDLDTDMDMDT) shows a compositional bias: acidic residues. Positions 1 to 107 (MHTDLDTDMD…SDSLGSGEAA (107 aa)) are disordered. Serine 27 bears the Phosphoserine mark. Residues 40-53 (LLKKSEKLLAELDR) are compositionally biased toward basic and acidic residues. Low complexity predominate over residues 93 to 104 (SSSGSSDSLGSG). GTP contacts are provided by residues 121–128 (GESGVGKS), 229–232 (NKSD), and 260–261 (AA). The segment at 283 to 308 (RNHAGGQRPDPGSPEGPAPPARRESL) is disordered. Over residues 293 to 302 (PGSPEGPAPP) the composition is skewed to pro residues. Phosphoserine is present on serine 295.

It belongs to the small GTPase superfamily. RGK family.

The protein localises to the cell membrane. Binds GTP saturably and exhibits a low intrinsic rate of GTP hydrolysis. The protein is GTP-binding protein REM 2 (REM2) of Homo sapiens (Human).